A 187-amino-acid chain; its full sequence is Ion-translocating oxidoreductase complex subunit B (187 aa).

The interval 1–26 (MTHILFAVLVLALLALAFGIILGFAA) is hydrophobic. One can recognise a 4Fe-4S domain in the interval 32 to 90 (EADPIVDQLDALLPQTQCGQCGYPGCKPYAEALANGDQINKCVPGGDATMRKIADLMGV). [4Fe-4S] cluster-binding residues include cysteine 49, cysteine 52, cysteine 57, cysteine 73, cysteine 115, cysteine 118, cysteine 121, cysteine 125, cysteine 145, cysteine 148, cysteine 151, and cysteine 155. 4Fe-4S ferredoxin-type domains are found at residues 106–135 (KVAF…GATK) and 136–165 (AMHT…MIPV).

Belongs to the 4Fe4S bacterial-type ferredoxin family. RnfB subfamily. The complex is composed of six subunits: RnfA, RnfB, RnfC, RnfD, RnfE and RnfG. [4Fe-4S] cluster serves as cofactor.

The protein resides in the cell inner membrane. In terms of biological role, part of a membrane-bound complex that couples electron transfer with translocation of ions across the membrane. The protein is Ion-translocating oxidoreductase complex subunit B of Aeromonas hydrophila subsp. hydrophila (strain ATCC 7966 / DSM 30187 / BCRC 13018 / CCUG 14551 / JCM 1027 / KCTC 2358 / NCIMB 9240 / NCTC 8049).